Here is a 268-residue protein sequence, read N- to C-terminus: Cytochrome b-c1 complex subunit Rieske-5, mitochondrial (268 aa).

A mitochondrion-targeting transit peptide spans 1-56; the sequence is MLRIAGRKLSSSAAARSSSAFFTRNPFTFTDDSSSPTRSPSPTSLASQFLDQFRGF. Residues 57–105 lie on the Mitochondrial matrix side of the membrane; that stretch reads SSNSVSPAHQTGLVSDLPATVAAIKNPSSKIVYDDSNHERYPPGDPSKR. A helical membrane pass occupies residues 106-128; it reads AFAYFVLTGGRFVYASLVRLLIL. At 129-268 the chain is on the mitochondrial intermembrane side; it reads KFVLSMSASK…FMEENKLLIG (140 aa). Residues 178 to 266 form the Rieske domain; sequence INLANSVDLG…YSFMEENKLL (89 aa). 4 residues coordinate [2Fe-2S] cluster: C211, H213, C230, and H233. The cysteines at positions 216 and 232 are disulfide-linked.

Belongs to the Rieske iron-sulfur protein family. Component of the ubiquinol-cytochrome c oxidoreductase (cytochrome b-c1 complex, complex III, CIII), a multisubunit enzyme composed of 3 respiratory subunits cytochrome b, cytochrome c1 and Rieske protein, 2 core protein subunits, and several low-molecular weight protein subunits. The complex exists as an obligatory dimer and forms supercomplexes (SCs) in the inner mitochondrial membrane with cytochrome c oxidase (complex IV, CIV). [2Fe-2S] cluster serves as cofactor. As to expression, high levels are seen in the flowers while a low level expression is seen in the roots, leaves and stems.

The protein resides in the mitochondrion inner membrane. The catalysed reaction is a quinol + 2 Fe(III)-[cytochrome c](out) = a quinone + 2 Fe(II)-[cytochrome c](out) + 2 H(+)(out). Component of the ubiquinol-cytochrome c oxidoreductase, a multisubunit transmembrane complex that is part of the mitochondrial electron transport chain which drives oxidative phosphorylation. The respiratory chain contains 3 multisubunit complexes succinate dehydrogenase (complex II, CII), ubiquinol-cytochrome c oxidoreductase (cytochrome b-c1 complex, complex III, CIII) and cytochrome c oxidase (complex IV, CIV), that cooperate to transfer electrons derived from NADH and succinate to molecular oxygen, creating an electrochemical gradient over the inner membrane that drives transmembrane transport and the ATP synthase. The cytochrome b-c1 complex catalyzes electron transfer from ubiquinol to cytochrome c, linking this redox reaction to translocation of protons across the mitochondrial inner membrane, with protons being carried across the membrane as hydrogens on the quinol. In the process called Q cycle, 2 protons are consumed from the matrix, 4 protons are released into the intermembrane space and 2 electrons are passed to cytochrome c. The Rieske protein is a catalytic core subunit containing a [2Fe-2S] iron-sulfur cluster. It cycles between 2 conformational states during catalysis to transfer electrons from the quinol bound in the Q(0) site in cytochrome b to cytochrome c1. This is Cytochrome b-c1 complex subunit Rieske-5, mitochondrial from Nicotiana tabacum (Common tobacco).